A 478-amino-acid polypeptide reads, in one-letter code: Catalase (478 aa).

The segment at 1 to 23 (MTNQLTTNEGQPWADNQHSQTAG) is disordered. Residues H53 and N126 contribute to the active site. A heme-binding site is contributed by Y336.

Belongs to the catalase family. Requires heme as cofactor.

It is found in the cytoplasm. It catalyses the reaction 2 H2O2 = O2 + 2 H2O. Decomposes hydrogen peroxide into water and oxygen; serves to protect cells from the toxic effects of hydrogen peroxide. The polypeptide is Catalase (katA) (Latilactobacillus sakei (Lactobacillus sakei)).